The chain runs to 58 residues: UPF0391 membrane protein Plav_0056 (58 aa).

Transmembrane regions (helical) follow at residues 4–24 and 30–50; these read WAAV…GGLV and IAQI…IFGV.

This sequence belongs to the UPF0391 family.

It is found in the cell membrane. This is UPF0391 membrane protein Plav_0056 from Parvibaculum lavamentivorans (strain DS-1 / DSM 13023 / NCIMB 13966).